The chain runs to 198 residues: GTP-binding protein RHO1 (198 aa).

GTP is bound at residue 16–23 (GDGACGKT). The Effector region motif lies at 38–46 (YVPTVFENY). GTP-binding positions include 63 to 67 (DTAGQ) and 121 to 124 (CKSD). The residue at position 195 (Cys195) is a Cysteine methyl ester. Cys195 carries the S-geranylgeranyl cysteine lipid modification. The propeptide at 196–198 (VVL) is removed in mature form.

This sequence belongs to the small GTPase superfamily. Rho family.

The protein localises to the cell membrane. This Candida albicans (strain SC5314 / ATCC MYA-2876) (Yeast) protein is GTP-binding protein RHO1 (RHO1).